We begin with the raw amino-acid sequence, 369 residues long: UDP-N-acetylglucosamine--N-acetylmuramyl-(pentapeptide) pyrophosphoryl-undecaprenol N-acetylglucosamine transferase (369 aa).

UDP-N-acetyl-alpha-D-glucosamine-binding positions include 15 to 17 (TGG), asparagine 126, arginine 169, serine 197, and glutamine 299.

The protein belongs to the glycosyltransferase 28 family. MurG subfamily.

Its subcellular location is the cell inner membrane. The catalysed reaction is di-trans,octa-cis-undecaprenyl diphospho-N-acetyl-alpha-D-muramoyl-L-alanyl-D-glutamyl-meso-2,6-diaminopimeloyl-D-alanyl-D-alanine + UDP-N-acetyl-alpha-D-glucosamine = di-trans,octa-cis-undecaprenyl diphospho-[N-acetyl-alpha-D-glucosaminyl-(1-&gt;4)]-N-acetyl-alpha-D-muramoyl-L-alanyl-D-glutamyl-meso-2,6-diaminopimeloyl-D-alanyl-D-alanine + UDP + H(+). Its pathway is cell wall biogenesis; peptidoglycan biosynthesis. Its function is as follows. Cell wall formation. Catalyzes the transfer of a GlcNAc subunit on undecaprenyl-pyrophosphoryl-MurNAc-pentapeptide (lipid intermediate I) to form undecaprenyl-pyrophosphoryl-MurNAc-(pentapeptide)GlcNAc (lipid intermediate II). The chain is UDP-N-acetylglucosamine--N-acetylmuramyl-(pentapeptide) pyrophosphoryl-undecaprenol N-acetylglucosamine transferase from Methylobacterium radiotolerans (strain ATCC 27329 / DSM 1819 / JCM 2831 / NBRC 15690 / NCIMB 10815 / 0-1).